The chain runs to 312 residues: Glyoxylate/hydroxypyruvate reductase A (312 aa).

Arg227 is a catalytic residue. The active-site Proton donor is His275.

The protein belongs to the D-isomer specific 2-hydroxyacid dehydrogenase family. GhrA subfamily.

It is found in the cytoplasm. The enzyme catalyses glycolate + NADP(+) = glyoxylate + NADPH + H(+). It carries out the reaction (R)-glycerate + NAD(+) = 3-hydroxypyruvate + NADH + H(+). The catalysed reaction is (R)-glycerate + NADP(+) = 3-hydroxypyruvate + NADPH + H(+). Its function is as follows. Catalyzes the NADPH-dependent reduction of glyoxylate and hydroxypyruvate into glycolate and glycerate, respectively. The chain is Glyoxylate/hydroxypyruvate reductase A from Escherichia coli (strain UTI89 / UPEC).